The primary structure comprises 718 residues: Polyribonucleotide nucleotidyltransferase (718 aa).

The Mg(2+) site is built by Asp-496 and Asp-502. The KH domain occupies 563–622; the sequence is PRLLTIKIDPDMIGLVIGPGGKTIKGITEETGAKIDIEDDGTVTISAVDENKAKRARNIV. An S1 motif domain is found at 632-700; sequence GDVYAGRVTR…NKGRINLTRL (69 aa).

The protein belongs to the polyribonucleotide nucleotidyltransferase family. The cofactor is Mg(2+).

The protein localises to the cytoplasm. It catalyses the reaction RNA(n+1) + phosphate = RNA(n) + a ribonucleoside 5'-diphosphate. Involved in mRNA degradation. Catalyzes the phosphorolysis of single-stranded polyribonucleotides processively in the 3'- to 5'-direction. The protein is Polyribonucleotide nucleotidyltransferase of Trichormus variabilis (strain ATCC 29413 / PCC 7937) (Anabaena variabilis).